Here is a 367-residue protein sequence, read N- to C-terminus: Embryonic developmental protein tofu-6 (367 aa).

The region spanning 13-92 (AGFHIRNIPK…FTLKVTDHKN (80 aa)) is the RRM domain. The required for ife-3 interaction stretch occupies residues 298 to 345 (KSILADRLQRKGVCEYLPRSQQPHYAYSRETLLQHNNSGVTAQISNDA).

As to quaternary structure, component of the pid-1 variant of the PETISCO complex (also called the pid-3, erh-2, tofu-6, and ife-3 small RNA complex) containing at least pid-1, tofu-6, ife-3, pid-3, and erh-2, which is required for the biogenesis of 21 nucleotide PIWI-interacting RNAs (piRNAs) that possess a uracil residue at the 5'-end (also called 21U-RNAs). Within the pid-1 variant of the PETISCO complex interacts with pid-1. Component of the tost-1 variant of the PETISCO complex (also called the pid-3, erh-2, tofu-6, and ife-3 small RNA complex) containing at least tost-1, tofu-6, ife-3, pid-3, and erh-2, which plays an essential role in embryogenesis. Within the tost-1 variant of the PETISCO complex interacts with tost-1. Within the pid-1 and tost-1 variants of the PETISCO complexes interacts (via C-terminus) with ife-3. Within the pid-1 and tost-1 variants of the PETISCO complexes interacts (via the RRM domain) with pid-3. Within the pid-1 and tost-1 variants of the PETISCO complexes interacts (via the RRM domain) with erh-2. In contrast to the pid-1 variant of the PETISCO complex, the tost-1 variant of the PETISCO complex plays a minor role in the biogenesis of 21U-RNAs. Interacts (via residues 120-314) with the PUCH complex subunit tofu-1 (via residues 82-172); the interaction between the PETISCO and PUCH complex members enhances piRNA production in vivo. In terms of tissue distribution, expression is restricted to the germline (at protein level).

Its subcellular location is the cytoplasm. The protein resides in the perinuclear region. It is found in the nucleus. In terms of biological role, component of the pid-1 and tost-1 variants of the PETISCO complexes, which have roles in the biogenesis of a class of 21 nucleotide PIWI-interacting RNAs (piRNAs) that possess a uracil residue at the 5'-end (also called 21U-RNAs) and embryogenesis, respectively. Promotes the biogenesis of 21U-RNAs. Mediates the interaction between the PETISCO complex and the PUCH complex, the endoribonuclease complex processing the 5'-end of precursor piRNAs, thereby enhancing mature piRNA production. Required for chromosome segregation and cell division in early embryos. May have a role in DNA replication. This chain is Embryonic developmental protein tofu-6, found in Caenorhabditis elegans.